A 127-amino-acid polypeptide reads, in one-letter code: MTEEVNPKAFPLADAQLTAKIMNLLQQALNYNQLRKGANEATKTLNRGLADIVVLAGDAEPIEILLHLPLLCEDKNVPYVFVRSKQALGRACGVSRPIVACSVTTNEGSQLKSQITSIQQEIERLLV.

Belongs to the eukaryotic ribosomal protein eL8 family.

The protein resides in the nucleus. It localises to the nucleolus. Its function is as follows. Binds to the 5'-stem-loop of U4 snRNA and may play a role in the late stage of spliceosome assembly. The protein undergoes a conformational change upon RNA-binding. This Drosophila melanogaster (Fruit fly) protein is NHP2-like protein 1 homolog (hoip).